We begin with the raw amino-acid sequence, 297 residues long: Cell division protein ZipA (297 aa).

M1 is a topological domain (periplasmic). The chain crosses the membrane as a helical span at residues 2–22; sequence EIGLREWLILIGIIVIAGILF. At 23–297 the chain is on the cytoplasmic side; it reads DGWRRMRGGK…FERRALTQKR (275 aa). The disordered stretch occupies residues 48–150; that stretch reads DEEGGSAEVL…GAAPASSSVK (103 aa). A compositionally biased stretch (basic and acidic residues) spans 83-92; sequence ARDREREPKP. Acidic residues predominate over residues 124-133; sequence LFADSDDDFA. Residues 136–149 are compositionally biased toward polar residues; sequence NNRSSGAAPASSSV.

Belongs to the ZipA family. In terms of assembly, interacts with FtsZ via their C-terminal domains.

The protein localises to the cell inner membrane. Functionally, essential cell division protein that stabilizes the FtsZ protofilaments by cross-linking them and that serves as a cytoplasmic membrane anchor for the Z ring. Also required for the recruitment to the septal ring of downstream cell division proteins. The protein is Cell division protein ZipA of Pseudomonas putida (strain ATCC 700007 / DSM 6899 / JCM 31910 / BCRC 17059 / LMG 24140 / F1).